A 366-amino-acid chain; its full sequence is UPF0324 membrane protein RSc1111 (366 aa).

8 helical membrane passes run 21–43 (LAGA…TAWA), 103–125 (LGAS…GAWV), 137–159 (AVLV…APAV), 169–191 (AIAS…YALA), 198–220 (VAPA…VIAA), 240–262 (VLAL…LVLE), 283–305 (WFAA…ATWH), and 343–365 (AGVL…RWLA).

Belongs to the UPF0324 family.

Its subcellular location is the cell membrane. This Ralstonia nicotianae (strain ATCC BAA-1114 / GMI1000) (Ralstonia solanacearum) protein is UPF0324 membrane protein RSc1111.